The following is an 89-amino-acid chain: Phosphoribulokinase, chloroplastic (89 aa).

Residues 1 to 22 (LTSVFGGAAEPPRGGNPDSNTL) form a disordered region.

The protein belongs to the phosphoribulokinase family.

It localises to the plastid. The protein resides in the chloroplast. It carries out the reaction D-ribulose 5-phosphate + ATP = D-ribulose 1,5-bisphosphate + ADP + H(+). Its pathway is carbohydrate biosynthesis; Calvin cycle. With respect to regulation, light regulated via thioredoxin by reversible oxidation/reduction of sulfhydryl/disulfide groups. This Vitis sp. (Grape) protein is Phosphoribulokinase, chloroplastic.